Reading from the N-terminus, the 94-residue chain is MANIKSAKKRILIAERNRLQNKAYKSAIKTFTKRFQAAVDDYKSNPSDDQLAAIQNEMSVTYSKIDKAVKVGVFHRNTGARKKAGLARILKAAT.

It belongs to the bacterial ribosomal protein bS20 family.

Functionally, binds directly to 16S ribosomal RNA. The polypeptide is Small ribosomal subunit protein bS20 (Acaryochloris marina (strain MBIC 11017)).